The following is a 237-amino-acid chain: Aspartate/glutamate leucyltransferase (237 aa).

It belongs to the R-transferase family. Bpt subfamily.

The protein localises to the cytoplasm. The catalysed reaction is N-terminal L-glutamyl-[protein] + L-leucyl-tRNA(Leu) = N-terminal L-leucyl-L-glutamyl-[protein] + tRNA(Leu) + H(+). The enzyme catalyses N-terminal L-aspartyl-[protein] + L-leucyl-tRNA(Leu) = N-terminal L-leucyl-L-aspartyl-[protein] + tRNA(Leu) + H(+). Functionally, functions in the N-end rule pathway of protein degradation where it conjugates Leu from its aminoacyl-tRNA to the N-termini of proteins containing an N-terminal aspartate or glutamate. This is Aspartate/glutamate leucyltransferase from Marinobacter nauticus (strain ATCC 700491 / DSM 11845 / VT8) (Marinobacter aquaeolei).